A 354-amino-acid chain; its full sequence is Opsin-1, short-wave-sensitive 2 (354 aa).

Over 1–43 (MKQQQQTPELFEDFHMPITLDVSNISAYSPFLVPQDHLGHSGV) the chain is Extracellular. Asparagine 24 carries an N-linked (GlcNAc...) asparagine glycan. A helical membrane pass occupies residues 44–68 (FMGMSAFMLFLFIAGTAINVLTIVC). Residues 69-80 (TIQYKKLRSHLN) lie on the Cytoplasmic side of the membrane. The helical transmembrane segment at 81–106 (YILVNLAISNLWVSVFGSSVAFYAFY) threads the bilayer. The Extracellular segment spans residues 107-120 (KKYFVFGPIGCKIE). A disulfide bridge connects residues cysteine 117 and cysteine 194. The helical transmembrane segment at 121 to 140 (GFTSTIGGMVSLWSLAVVAL) threads the bilayer. Topologically, residues 141 to 159 (ERWLVICKPLGNFTFKTPH) are cytoplasmic. Residues 160 to 183 (AIAGCILPWCMALAAGLPPLLGWS) form a helical membrane-spanning segment. Over 184-209 (RYIPEGLQCSCGPDWYTTNNKFNNES) the chain is Extracellular. Asparagine 207 is a glycosylation site (N-linked (GlcNAc...) asparagine). A helical transmembrane segment spans residues 210 to 237 (YVMFLFCFCFAVPFSTIVFCYGQLLITL). Over 238 to 259 (KLAAKAQADSASTQKAEREVTK) the chain is Cytoplasmic. The helical transmembrane segment at 260-283 (MVVVMVFGFLICWGPYAIFAIWVV) threads the bilayer. Topologically, residues 284 to 291 (SNRGAPFD) are extracellular. A helical membrane pass occupies residues 292–316 (LRLATIPSCLCKASTVYNPVIYVLM). Residue lysine 303 is modified to N6-(retinylidene)lysine. The Cytoplasmic segment spans residues 317–354 (NKQFRSCMMKMVFNKNIEEDEASSSSQVTQVSSVAPEK).

It belongs to the G-protein coupled receptor 1 family. Opsin subfamily. Post-translationally, phosphorylated on some or all of the serine and threonine residues present in the C-terminal region. Retinal long single cone outer segments.

The protein localises to the membrane. Visual pigments are the light-absorbing molecules that mediate vision. They consist of an apoprotein, opsin, covalently linked to cis-retinal. This chain is Opsin-1, short-wave-sensitive 2 (opn1sw2), found in Danio rerio (Zebrafish).